We begin with the raw amino-acid sequence, 331 residues long: Ketol-acid reductoisomerase (NADP(+)) (331 aa).

The KARI N-terminal Rossmann domain maps to 2-181 (TKVYYEDAVK…GATRAGVIET (180 aa)). NADP(+) contacts are provided by residues 25 to 28 (YGSQ), Arg48, Ser52, and 82 to 85 (DETQ). His107 is a catalytic residue. Gly133 contributes to the NADP(+) binding site. The KARI C-terminal knotted domain occupies 182 to 327 (TFKEETETDL…AELREMMPFV (146 aa)). Mg(2+) contacts are provided by Asp190, Glu194, Glu226, and Glu230. Ser251 lines the substrate pocket.

Belongs to the ketol-acid reductoisomerase family. Requires Mg(2+) as cofactor.

It catalyses the reaction (2R)-2,3-dihydroxy-3-methylbutanoate + NADP(+) = (2S)-2-acetolactate + NADPH + H(+). The catalysed reaction is (2R,3R)-2,3-dihydroxy-3-methylpentanoate + NADP(+) = (S)-2-ethyl-2-hydroxy-3-oxobutanoate + NADPH + H(+). It participates in amino-acid biosynthesis; L-isoleucine biosynthesis; L-isoleucine from 2-oxobutanoate: step 2/4. It functions in the pathway amino-acid biosynthesis; L-valine biosynthesis; L-valine from pyruvate: step 2/4. Involved in the biosynthesis of branched-chain amino acids (BCAA). Catalyzes an alkyl-migration followed by a ketol-acid reduction of (S)-2-acetolactate (S2AL) to yield (R)-2,3-dihydroxy-isovalerate. In the isomerase reaction, S2AL is rearranged via a Mg-dependent methyl migration to produce 3-hydroxy-3-methyl-2-ketobutyrate (HMKB). In the reductase reaction, this 2-ketoacid undergoes a metal-dependent reduction by NADPH to yield (R)-2,3-dihydroxy-isovalerate. The chain is Ketol-acid reductoisomerase (NADP(+)) from Listeria monocytogenes serovar 1/2a (strain ATCC BAA-679 / EGD-e).